The following is a 294-amino-acid chain: Ribosomal protein L11 methyltransferase (294 aa).

Positions 144, 165, 187, and 229 each coordinate S-adenosyl-L-methionine.

This sequence belongs to the methyltransferase superfamily. PrmA family.

It localises to the cytoplasm. It carries out the reaction L-lysyl-[protein] + 3 S-adenosyl-L-methionine = N(6),N(6),N(6)-trimethyl-L-lysyl-[protein] + 3 S-adenosyl-L-homocysteine + 3 H(+). Functionally, methylates ribosomal protein L11. The polypeptide is Ribosomal protein L11 methyltransferase (Cellvibrio japonicus (strain Ueda107) (Pseudomonas fluorescens subsp. cellulosa)).